A 317-amino-acid chain; its full sequence is Ribosomal protein L11 methyltransferase (317 aa).

Residues Thr-158, Gly-179, Asp-201, and Asn-244 each coordinate S-adenosyl-L-methionine.

Belongs to the methyltransferase superfamily. PrmA family.

It localises to the cytoplasm. It carries out the reaction L-lysyl-[protein] + 3 S-adenosyl-L-methionine = N(6),N(6),N(6)-trimethyl-L-lysyl-[protein] + 3 S-adenosyl-L-homocysteine + 3 H(+). Functionally, methylates ribosomal protein L11. This chain is Ribosomal protein L11 methyltransferase, found in Streptococcus uberis (strain ATCC BAA-854 / 0140J).